Reading from the N-terminus, the 135-residue chain is Small ribosomal subunit protein bS16m (135 aa).

Residues 1–34 (MVQLTTIFCKAYHGGHLTIRLALGGCTNRPFYRI) constitute a mitochondrion transit peptide.

It belongs to the bacterial ribosomal protein bS16 family. In terms of assembly, component of the mitochondrial ribosome small subunit (28S) which comprises a 12S rRNA and about 30 distinct proteins.

It is found in the mitochondrion. The polypeptide is Small ribosomal subunit protein bS16m (Mrps16) (Mus musculus (Mouse)).